Consider the following 469-residue polypeptide: ATP synthase subunit beta (469 aa).

155 to 162 is a binding site for ATP; that stretch reads GGAGVGKT.

This sequence belongs to the ATPase alpha/beta chains family. F-type ATPases have 2 components, CF(1) - the catalytic core - and CF(0) - the membrane proton channel. CF(1) has five subunits: alpha(3), beta(3), gamma(1), delta(1), epsilon(1). CF(0) has three main subunits: a(1), b(2) and c(9-12). The alpha and beta chains form an alternating ring which encloses part of the gamma chain. CF(1) is attached to CF(0) by a central stalk formed by the gamma and epsilon chains, while a peripheral stalk is formed by the delta and b chains.

Its subcellular location is the cell inner membrane. It carries out the reaction ATP + H2O + 4 H(+)(in) = ADP + phosphate + 5 H(+)(out). In terms of biological role, produces ATP from ADP in the presence of a proton gradient across the membrane. The catalytic sites are hosted primarily by the beta subunits. This chain is ATP synthase subunit beta, found in Thermosipho melanesiensis (strain DSM 12029 / CIP 104789 / BI429).